A 64-amino-acid polypeptide reads, in one-letter code: Large ribosomal subunit protein bL35 (64 aa).

It belongs to the bacterial ribosomal protein bL35 family.

In Amoebophilus asiaticus (strain 5a2), this protein is Large ribosomal subunit protein bL35.